The sequence spans 493 residues: Glutamate--tRNA ligase (493 aa).

A 'HIGH' region motif is present at residues 10 to 20 (PSPTGDPHVGT). The short motif at 251–255 (KLSKR) is the 'KMSKS' region element. An ATP-binding site is contributed by Lys-254.

The protein belongs to the class-I aminoacyl-tRNA synthetase family. Glutamate--tRNA ligase type 1 subfamily. As to quaternary structure, monomer.

It localises to the cytoplasm. It catalyses the reaction tRNA(Glu) + L-glutamate + ATP = L-glutamyl-tRNA(Glu) + AMP + diphosphate. In terms of biological role, catalyzes the attachment of glutamate to tRNA(Glu) in a two-step reaction: glutamate is first activated by ATP to form Glu-AMP and then transferred to the acceptor end of tRNA(Glu). This is Glutamate--tRNA ligase from Pseudomonas savastanoi pv. phaseolicola (strain 1448A / Race 6) (Pseudomonas syringae pv. phaseolicola (strain 1448A / Race 6)).